A 1947-amino-acid chain; its full sequence is DNA-directed RNA polymerase subunit beta' (1947 aa).

Zn(2+) is bound by residues C119, C121, C141, and C144. The Mg(2+) site is built by D1778, D1780, and D1782.

The protein belongs to the RNA polymerase beta' chain family. RpoC1 subfamily. In plastids the minimal PEP RNA polymerase catalytic core is composed of four subunits: alpha, beta, beta', and beta''. When a (nuclear-encoded) sigma factor is associated with the core the holoenzyme is formed, which can initiate transcription. Mg(2+) serves as cofactor. It depends on Zn(2+) as a cofactor.

It is found in the plastid. It localises to the chloroplast. It carries out the reaction RNA(n) + a ribonucleoside 5'-triphosphate = RNA(n+1) + diphosphate. DNA-dependent RNA polymerase catalyzes the transcription of DNA into RNA using the four ribonucleoside triphosphates as substrates. In Oedogonium cardiacum (Filamentous green alga), this protein is DNA-directed RNA polymerase subunit beta'.